The chain runs to 303 residues: Acetyl-coenzyme A carboxylase carboxyl transferase subunit beta (303 aa).

A CoA carboxyltransferase N-terminal domain is found at 25–294; that stretch reads LWIKCPETGE…NDVSAKSLNG (270 aa).

This sequence belongs to the AccD/PCCB family. In terms of assembly, acetyl-CoA carboxylase is a heterohexamer composed of biotin carboxyl carrier protein (AccB), biotin carboxylase (AccC) and two subunits each of ACCase subunit alpha (AccA) and ACCase subunit beta (AccD).

The protein resides in the cytoplasm. The enzyme catalyses N(6)-carboxybiotinyl-L-lysyl-[protein] + acetyl-CoA = N(6)-biotinyl-L-lysyl-[protein] + malonyl-CoA. It participates in lipid metabolism; malonyl-CoA biosynthesis; malonyl-CoA from acetyl-CoA: step 1/1. Its function is as follows. Component of the acetyl coenzyme A carboxylase (ACC) complex. Biotin carboxylase (BC) catalyzes the carboxylation of biotin on its carrier protein (BCCP) and then the CO(2) group is transferred by the transcarboxylase to acetyl-CoA to form malonyl-CoA. In Rhizobium rhizogenes (strain K84 / ATCC BAA-868) (Agrobacterium radiobacter), this protein is Acetyl-coenzyme A carboxylase carboxyl transferase subunit beta.